The primary structure comprises 261 residues: Transmembrane protein 106A (261 aa).

Positions 1–10 (MGKAFSQLTS) are enriched in polar residues. The interval 1-22 (MGKAFSQLTSQKDEDKSILPDN) is disordered. Residues 93-113 (LSVFLAVTICLLIFSLTIFFL) traverse the membrane as a helical segment.

It belongs to the TMEM106 family.

The protein resides in the cell membrane. Its function is as follows. Activates macrophages and polarizes them into M1-like macrophages through the activation of the MAPK and NF-kappaB signaling pathway. Upon activation, up-regulates the expression of CD80, CD86, CD69 and MHC II on macrophages, and induces the release of pro-inflammatory cytokines such as TNF, IL1B, IL6, CCL2 and nitric oxide. May play a role in inhibition of proliferation and migration. The polypeptide is Transmembrane protein 106A (Tmem106a) (Rattus norvegicus (Rat)).